The primary structure comprises 430 residues: Adenylosuccinate synthetase (430 aa).

Residues 12-18 and 40-42 contribute to the GTP site; these read GDEGKGK and GHT. The active-site Proton acceptor is the Asp13. Residues Asp13 and Gly40 each coordinate Mg(2+). Residues 13-16, 38-41, Thr128, Arg142, Gln223, Thr238, and Arg302 contribute to the IMP site; these read DEGK and NAGH. Residue His41 is the Proton donor of the active site. Residue 298-304 coordinates substrate; it reads TTTGRPR. Residues Arg304, 330-332, and 412-414 contribute to the GTP site; these read SID and SVG.

The protein belongs to the adenylosuccinate synthetase family. As to quaternary structure, homodimer. The cofactor is Mg(2+).

The protein localises to the cytoplasm. The catalysed reaction is IMP + L-aspartate + GTP = N(6)-(1,2-dicarboxyethyl)-AMP + GDP + phosphate + 2 H(+). The protein operates within purine metabolism; AMP biosynthesis via de novo pathway; AMP from IMP: step 1/2. Plays an important role in the de novo pathway of purine nucleotide biosynthesis. Catalyzes the first committed step in the biosynthesis of AMP from IMP. In Streptococcus sanguinis (strain SK36), this protein is Adenylosuccinate synthetase.